The primary structure comprises 137 residues: Small ribosomal subunit protein uS12 (137 aa).

A disordered region spans residues 1-55 (MPTINQLVRKPRKSKVEKSDSPALNKGYNSFKKTQTNVNSPQKRGVCTRVGTMTP). Positions 27 to 42 (GYNSFKKTQTNVNSPQ) are enriched in polar residues. At Asp102 the chain carries 3-methylthioaspartic acid.

The protein belongs to the universal ribosomal protein uS12 family. In terms of assembly, part of the 30S ribosomal subunit. Contacts proteins S8 and S17. May interact with IF1 in the 30S initiation complex.

In terms of biological role, with S4 and S5 plays an important role in translational accuracy. Interacts with and stabilizes bases of the 16S rRNA that are involved in tRNA selection in the A site and with the mRNA backbone. Located at the interface of the 30S and 50S subunits, it traverses the body of the 30S subunit contacting proteins on the other side and probably holding the rRNA structure together. The combined cluster of proteins S8, S12 and S17 appears to hold together the shoulder and platform of the 30S subunit. This is Small ribosomal subunit protein uS12 from Enterococcus faecalis (strain ATCC 700802 / V583).